The following is a 308-amino-acid chain: Ferrochelatase (308 aa).

Fe cation is bound by residues His167 and Glu239.

This sequence belongs to the ferrochelatase family.

The protein localises to the cytoplasm. It catalyses the reaction heme b + 2 H(+) = protoporphyrin IX + Fe(2+). It functions in the pathway porphyrin-containing compound metabolism; protoheme biosynthesis; protoheme from protoporphyrin-IX: step 1/1. Its function is as follows. Catalyzes the ferrous insertion into protoporphyrin IX. The chain is Ferrochelatase from Thermoplasma acidophilum (strain ATCC 25905 / DSM 1728 / JCM 9062 / NBRC 15155 / AMRC-C165).